A 310-amino-acid polypeptide reads, in one-letter code: MNNNLLIIAGPTAVGKSDLSVDLAKKLNGEIISVDSMQIYKYMDIGSAKISKEEMGGIPHYLIDFVDPSKEFSVAEFKDLTTEKIKDIQSRGKLPILVGGTGLYINSIICNMNFAESDKDEEYREELEKIANEHGNEYLHEMLKDIDLESYNSIHFNNRKRVIRALETYKLTGKPFSSFKAKNSIYETPYNIYYYVLNMDRAKLYDRINKRVDIMFEKGLLEEVKNLKAMGLTDDMQSMKGIGYKEVLYYLDGKISLEQCIEMIKQGSRNYAKRQLTWFRKDPRAIFIDKDTFASEEDISSKIINDIINS.

10–17 (GPTAVGKS) contacts ATP. Residue 12 to 17 (TAVGKS) participates in substrate binding. Positions 35–38 (DSMQ) are interaction with substrate tRNA.

This sequence belongs to the IPP transferase family. In terms of assembly, monomer. Mg(2+) is required as a cofactor.

It carries out the reaction adenosine(37) in tRNA + dimethylallyl diphosphate = N(6)-dimethylallyladenosine(37) in tRNA + diphosphate. In terms of biological role, catalyzes the transfer of a dimethylallyl group onto the adenine at position 37 in tRNAs that read codons beginning with uridine, leading to the formation of N6-(dimethylallyl)adenosine (i(6)A). The sequence is that of tRNA dimethylallyltransferase from Clostridium perfringens (strain 13 / Type A).